A 234-amino-acid polypeptide reads, in one-letter code: Large ribosomal subunit protein uL1 (234 aa).

It belongs to the universal ribosomal protein uL1 family. As to quaternary structure, part of the 50S ribosomal subunit.

Its function is as follows. Binds directly to 23S rRNA. The L1 stalk is quite mobile in the ribosome, and is involved in E site tRNA release. Functionally, protein L1 is also a translational repressor protein, it controls the translation of the L11 operon by binding to its mRNA. The polypeptide is Large ribosomal subunit protein uL1 (Pseudoalteromonas translucida (strain TAC 125)).